Reading from the N-terminus, the 219-residue chain is tRNA (guanine-N(7)-)-methyltransferase (219 aa).

S-adenosyl-L-methionine contacts are provided by Asp-47, Glu-72, Asn-99, and Asp-125. Asp-125 is an active-site residue. The substrate site is built by Lys-129 and Asp-161.

The protein belongs to the class I-like SAM-binding methyltransferase superfamily. TrmB family.

The catalysed reaction is guanosine(46) in tRNA + S-adenosyl-L-methionine = N(7)-methylguanosine(46) in tRNA + S-adenosyl-L-homocysteine. Its pathway is tRNA modification; N(7)-methylguanine-tRNA biosynthesis. Its function is as follows. Catalyzes the formation of N(7)-methylguanine at position 46 (m7G46) in tRNA. In Nostoc sp. (strain PCC 7120 / SAG 25.82 / UTEX 2576), this protein is tRNA (guanine-N(7)-)-methyltransferase.